The primary structure comprises 226 residues: Ribonuclease HII (226 aa).

Positions 29–220 constitute an RNase H type-2 domain; sequence GPVAGVDEAG…VAALLHRVDN (192 aa). A divalent metal cation contacts are provided by Asp35, Glu36, and Asp129.

Belongs to the RNase HII family. The cofactor is Mn(2+). Mg(2+) serves as cofactor.

The protein resides in the cytoplasm. The catalysed reaction is Endonucleolytic cleavage to 5'-phosphomonoester.. In terms of biological role, endonuclease that specifically degrades the RNA of RNA-DNA hybrids. This Rhodococcus opacus (strain B4) protein is Ribonuclease HII.